Consider the following 92-residue polypeptide: YcgL domain-containing protein PBPRA1080 (92 aa).

Positions 1–84 (MLCSIYKSSK…PVTNLLHQYK (84 aa)) constitute a YcgL domain.

This chain is YcgL domain-containing protein PBPRA1080, found in Photobacterium profundum (strain SS9).